We begin with the raw amino-acid sequence, 24 residues long: SM-11044-binding protein (24 aa).

May mediate relaxation of depolarized colon tonus. It binds iodocyanopindolol and SM-11044. This chain is SM-11044-binding protein, found in Rattus norvegicus (Rat).